A 578-amino-acid polypeptide reads, in one-letter code: Frizzled and smoothened-like protein Q (578 aa).

An N-terminal signal peptide occupies residues 1 to 23 (MKNSFLINILIIYYLFIILFVNS). The Extracellular segment spans residues 24 to 233 (QDLKLGGSCE…GKTKILDRTN (210 aa)). Residues 27-157 (KLGGSCELID…GAPMFPINST (131 aa)) enclose the FZ domain. Disulfide bonds link C32/C95, C41/C88, C79/C128, and C121/C141. 4 N-linked (GlcNAc...) asparagine glycosylation sites follow: N46, N64, N99, and N104. N-linked (GlcNAc...) asparagine glycosylation is found at N144, N155, N181, and N233. A helical transmembrane segment spans residues 234 to 254 (YTLTSISFITCIFMILTFGVL). Residues 255-261 (PNKITHR) are Cytoplasmic-facing. Residues 262–282 (MESILSFACGGCITALSLFIQ) form a helical membrane-spanning segment. Topologically, residues 283–305 (SRQDNFNCSSDPGRFKSQSDYLC) are extracellular. N289 carries an N-linked (GlcNAc...) asparagine glycan. The chain crosses the membrane as a helical span at residues 306–326 (LLTGLIFQFGAITSIFWSPMI). Residues 327–341 (AYDFYITSTLGKIRK) are Cytoplasmic-facing. A helical transmembrane segment spans residues 342–362 (FGLYRIVLWSFIFVLTALPAF). Topologically, residues 363 to 388 (GGKYSATVATNCWINSDDGSAWQYVS) are extracellular. Residues 389–409 (FYIPSWCAMGLICLFSILSVI) traverse the membrane as a helical segment. Over 410–422 (NVSKMYIQTPNNR) the chain is Cytoplasmic. A helical transmembrane segment spans residues 423-443 (ILFFNIKILITLLLFLFVLTF). Residues 444-490 (ASSLKFYMEERMDTYFDAIAVWVECIGKGDPSQCELHAPGYDLKALN) lie on the Extracellular side of the membrane. Residues 491-511 (IVVIGILGFTVFIGYGLDPIV) form a helical membrane-spanning segment. Topologically, residues 512–578 (IHIWMESKKF…LKSTEINQQP (67 aa)) are cytoplasmic. Over residues 544–556 (NNNNNETASTSSG) the composition is skewed to low complexity. Residues 544 to 578 (NNNNNETASTSSGNERKQTTVKMSNLKSTEINQQP) form a disordered region. A compositionally biased stretch (polar residues) spans 563 to 578 (TVKMSNLKSTEINQQP).

The protein belongs to the G-protein coupled receptor Fz/Smo family.

Its subcellular location is the membrane. The sequence is that of Frizzled and smoothened-like protein Q (fslQ) from Dictyostelium discoideum (Social amoeba).